Here is a 245-residue protein sequence, read N- to C-terminus: AP-1-like transcription factor YAP5 (245 aa).

Over residues 34–47 (LPHRAAQRRKRVHR) the composition is skewed to basic residues. Residues 34–77 (LPHRAAQRRKRVHRLHEDYETEENDEELQKKKRQNRDAQRAYRE) are disordered. One can recognise a bZIP domain in the interval 58-121 (DEELQKKKRQ…QAKESENHAL (64 aa)). A basic motif region spans residues 63 to 82 (KKKRQNRDAQRAYRERKNNK). Residues 68 to 77 (NRDAQRAYRE) are compositionally biased toward basic and acidic residues. Residues 86–114 (LEETIESLSKVVKNYETKLNRLQNELQAK) form a leucine-zipper region.

Belongs to the bZIP family. YAP subfamily. In terms of assembly, homodimer.

The protein localises to the cytoplasm. Its subcellular location is the nucleus. Transcription activator involved in the regulation of genes expressed in response to environmental changes and metabolic requirements. According to genome-wide promoter binding and gene expression studies it is a coregulator for the expression of ribosomal genes, while its own expression is induced by the cell cycle specific activator SBF (SWI4-SWI6). This chain is AP-1-like transcription factor YAP5 (YAP5), found in Saccharomyces cerevisiae (strain ATCC 204508 / S288c) (Baker's yeast).